The sequence spans 488 residues: MKFKDLRDFVQQLEQRGELKRIQMPISPVLEMTEICDRTLRAKGPALLFEKPVGFDIPVLGNLFGTPERVAMGMGAEAVSELREIGKLLAFLKEPEPPKGLKDAWSKLPIFRKVIAMAPKVVKDAPCQEIVIEGDDVDLGMLPVQTCWPGDVAPLITWGLTVTKGPNKERQNLGIYRQQVIGRNKIIMRWLSHRGGALDFRDWCAKHPGEPYPVAVALGADPATILGAVTPVPDSLSEYAFAGLLRGSRTELIKCRGSNLQVPASAEIVLEGVIHPGEMADEGPYGDHTGYYNEVDSFPVLTVERITHRIKPIYHSTYTGRPPDEPAILGVALNEVFVPILQKQFPEIVDFYLPPEGCSYRMAVVTIKKQYPGHAKRVMLGVWSFLRQFMYTKFVIVTDDDINARDWNDVIWAITTRMDPKRDTVMIDNTPIDYLDFASPVSGLGSKMGLDVTNKWPGETTREWGRAIVKDEATTRRVDEIWTQLGID.

Mn(2+) is bound at residue Asn172. Residues 175–177 (IYR), 189–191 (RWL), and 194–195 (RG) each bind prenylated FMN. Position 238 (Glu238) interacts with Mn(2+). Asp287 (proton donor) is an active-site residue.

Belongs to the UbiD family. In terms of assembly, homohexamer. Prenylated FMN is required as a cofactor. Mn(2+) serves as cofactor.

The protein resides in the cell membrane. The catalysed reaction is a 4-hydroxy-3-(all-trans-polyprenyl)benzoate + H(+) = a 2-(all-trans-polyprenyl)phenol + CO2. It participates in cofactor biosynthesis; ubiquinone biosynthesis. In terms of biological role, catalyzes the decarboxylation of 3-octaprenyl-4-hydroxy benzoate to 2-octaprenylphenol, an intermediate step in ubiquinone biosynthesis. In Pseudomonas savastanoi pv. phaseolicola (strain 1448A / Race 6) (Pseudomonas syringae pv. phaseolicola (strain 1448A / Race 6)), this protein is 3-octaprenyl-4-hydroxybenzoate carboxy-lyase.